An 829-amino-acid chain; its full sequence is Probable beta-glucosidase H (829 aa).

A glycan (N-linked (GlcNAc...) asparagine) is linked at N13. D225 is an active-site residue. N-linked (GlcNAc...) asparagine glycosylation is found at N304, N473, N602, N627, and N664. One can recognise a PA14 domain in the interval 389 to 548 (RMLSNAVIHF…DPEQMVANAV (160 aa)).

Belongs to the glycosyl hydrolase 3 family.

It localises to the secreted. The enzyme catalyses Hydrolysis of terminal, non-reducing beta-D-glucosyl residues with release of beta-D-glucose.. It participates in glycan metabolism; cellulose degradation. Beta-glucosidases are one of a number of cellulolytic enzymes involved in the degradation of cellulosic biomass. Catalyzes the last step releasing glucose from the inhibitory cellobiose. In Aspergillus fumigatus (strain ATCC MYA-4609 / CBS 101355 / FGSC A1100 / Af293) (Neosartorya fumigata), this protein is Probable beta-glucosidase H (bglH).